Consider the following 211-residue polypeptide: N-(5'-phosphoribosyl)anthranilate isomerase (211 aa).

The protein belongs to the TrpF family.

The catalysed reaction is N-(5-phospho-beta-D-ribosyl)anthranilate = 1-(2-carboxyphenylamino)-1-deoxy-D-ribulose 5-phosphate. The protein operates within amino-acid biosynthesis; L-tryptophan biosynthesis; L-tryptophan from chorismate: step 3/5. In Zymomonas mobilis subsp. pomaceae (strain ATCC 29192 / DSM 22645 / JCM 10191 / CCUG 17912 / NBRC 13757 / NCIMB 11200 / NRRL B-4491 / Barker I), this protein is N-(5'-phosphoribosyl)anthranilate isomerase.